We begin with the raw amino-acid sequence, 504 residues long: Sodium-coupled neutral amino acid transporter 3 (504 aa).

Phosphoserine; by PKC is present on S52. N73 is a glycosylation site (N-linked (GlcNAc...) asparagine). 5 helical membrane passes run 82–102 (GILG…LFLL), 105–125 (VALL…IVGI), 143–163 (AAAL…LYII), 186–206 (MDGN…LALM), and 212–232 (LGYS…AVIY). C239 and C275 are joined by a disulfide. 2 N-linked (GlcNAc...) asparagine glycosylation sites follow: N247 and N251. The chain crosses the membrane as a helical span at residues 287–307 (AYTIPIMAFAFVCHPEVLPIY). N-linked (GlcNAc...) asparagine glycosylation is present at N323. 5 consecutive transmembrane segments (helical) span residues 324-344 (LSIA…YLTF), 366-386 (ILCV…IVLF), 408-428 (VLIA…APNI), 431-451 (IFGI…PAIF), and 469-489 (ILAL…LSFI).

It belongs to the amino acid/polyamine transporter 2 family. In terms of processing, phosphorylation at Ser-52 induces internalization and sequestration into an intracellular reservoir. During dephosphorylation by protein phosphatases, can recycle back to the plasma membrane and regain activity. Prolonged phosphorylation results in its degradation. As to expression, highly expressed in liver. Expressed in skeletal muscle. Expressed in kidney, heart and brain. Not detected in gut, lung or spleen. Expressed ubiquitously in hepatocytes in liver whereas in kidney expression is restricted to the medulla. Within brain, expressed in glial cells. In the cerebellum, expressed on Bergmann glial fibers in the molecular layer and astrocytes in the granule layer. Expressed in brain kidney and liver (at protein level). In the adult kidney, highly expressed in the outer strip of the outer medulla and medullary rays penetrating into the kidney cortex (at protein level).

Its subcellular location is the cell membrane. It is found in the basolateral cell membrane. The enzyme catalyses L-glutamine(out) + Na(+)(out) + H(+)(in) = L-glutamine(in) + Na(+)(in) + H(+)(out). The catalysed reaction is L-asparagine(out) + Na(+)(out) + H(+)(in) = L-asparagine(in) + Na(+)(in) + H(+)(out). It carries out the reaction L-histidine(out) + Na(+)(out) + H(+)(in) = L-histidine(in) + Na(+)(in) + H(+)(out). With respect to regulation, L-glutamine efflux and L-glutamine uptake are regulated by CO2/HCO3(-) through SLC4A4 leading to modulation of cytosolic pH and Na(+)concentration. Symporter that cotransports specific neutral amino acids and sodium ions, coupled to an H(+) antiporter activity. Mainly participates in the glutamate-GABA-glutamine cycle in brain where it transports L-glutamine from astrocytes in the intercellular space for the replenishment of both neurotransmitters glutamate and gamma-aminobutyric acid (GABA) in neurons. Also functions as the major influx transporter in ganglion cells mediating the uptake of glutamine. The transport activity is specific for L-glutamine, L-histidine and L-asparagine. The transport is electroneutral coupled to the cotransport of 1 Na(+) and the antiport of 1 H(+), pH dependent, saturable, Li(+) tolerant and functions in both direction depending on the concentration gradients of its substrates and cotransported ions. Also mediates an amino acid-gated H(+) conductance that is not stoichiometrically coupled to the amino acid transport but which influences the ionic gradients that drive the amino acid transport. In addition, may play a role in nitrogen metabolism, amino acid homeostasis, glucose metabolism and renal ammoniagenesis. The chain is Sodium-coupled neutral amino acid transporter 3 from Rattus norvegicus (Rat).